The sequence spans 486 residues: Arginine/agmatine antiporter (486 aa).

The next 12 helical transmembrane spans lie at leucine 12–serine 32, alanine 41–alanine 61, glycine 85–glycine 105, asparagine 129–leucine 149, isoleucine 161–phenylalanine 181, serine 211–alanine 231, alanine 242–phenylalanine 262, isoleucine 296–isoleucine 316, valine 341–threonine 361, methionine 367–valine 387, isoleucine 418–leucine 438, and glutamate 461–threonine 481.

This sequence belongs to the amino acid-polyamine-organocation (APC) superfamily. Basic amino acid/polyamine antiporter (APA) (TC 2.A.3.2) family.

Its subcellular location is the cell inner membrane. In terms of biological role, catalyzes the exchange of L-arginine for agmatine. The arginine uptake by the bacterium in the macrophage may be a virulence factor against the host innate immune response. This chain is Arginine/agmatine antiporter (aaxC), found in Chlamydia felis (strain Fe/C-56) (Chlamydophila felis).